Here is a 330-residue protein sequence, read N- to C-terminus: Phosphate acyltransferase (330 aa).

Belongs to the PlsX family. Homodimer. Probably interacts with PlsY.

It is found in the cytoplasm. It carries out the reaction a fatty acyl-[ACP] + phosphate = an acyl phosphate + holo-[ACP]. Its pathway is lipid metabolism; phospholipid metabolism. Functionally, catalyzes the reversible formation of acyl-phosphate (acyl-PO(4)) from acyl-[acyl-carrier-protein] (acyl-ACP). This enzyme utilizes acyl-ACP as fatty acyl donor, but not acyl-CoA. The protein is Phosphate acyltransferase of Bacillus cereus (strain ATCC 14579 / DSM 31 / CCUG 7414 / JCM 2152 / NBRC 15305 / NCIMB 9373 / NCTC 2599 / NRRL B-3711).